The sequence spans 245 residues: tRNA1(Val) (adenine(37)-N6)-methyltransferase (245 aa).

The protein belongs to the methyltransferase superfamily. tRNA (adenine-N(6)-)-methyltransferase family.

It is found in the cytoplasm. The catalysed reaction is adenosine(37) in tRNA1(Val) + S-adenosyl-L-methionine = N(6)-methyladenosine(37) in tRNA1(Val) + S-adenosyl-L-homocysteine + H(+). Functionally, specifically methylates the adenine in position 37 of tRNA(1)(Val) (anticodon cmo5UAC). In Escherichia coli O139:H28 (strain E24377A / ETEC), this protein is tRNA1(Val) (adenine(37)-N6)-methyltransferase.